A 1004-amino-acid polypeptide reads, in one-letter code: 2-oxoglutarate dehydrogenase E1 component (1004 aa).

It belongs to the alpha-ketoglutarate dehydrogenase family. In terms of assembly, homodimer. Part of the 2-oxoglutarate dehydrogenase (OGDH) complex composed of E1 (2-oxoglutarate dehydrogenase), E2 (dihydrolipoamide succinyltransferase) and E3 (dihydrolipoamide dehydrogenase); the complex contains multiple copies of the three enzymatic components (E1, E2 and E3). Requires thiamine diphosphate as cofactor.

It carries out the reaction N(6)-[(R)-lipoyl]-L-lysyl-[protein] + 2-oxoglutarate + H(+) = N(6)-[(R)-S(8)-succinyldihydrolipoyl]-L-lysyl-[protein] + CO2. In terms of biological role, E1 component of the 2-oxoglutarate dehydrogenase (OGDH) complex which catalyzes the decarboxylation of 2-oxoglutarate, the first step in the conversion of 2-oxoglutarate to succinyl-CoA and CO(2). This is 2-oxoglutarate dehydrogenase E1 component from Brucella suis biovar 1 (strain 1330).